The sequence spans 615 residues: Aldehyde oxidase GLOX1 (615 aa).

Positions 1-25 are cleaved as a signal peptide; the sequence is MKKSTRLLWLLSIIVLVAAVSKAVA. N-linked (GlcNAc...) asparagine glycosylation occurs at Asn-35. The interval 70–89 is disordered; that stretch reads PPKAGKGKGKGKGRGTVAAG. Basic residues predominate over residues 72 to 82; it reads KAGKGKGKGKG. Residues Asn-187 and Asn-297 are each glycosylated (N-linked (GlcNAc...) asparagine).

It localises to the secreted. It catalyses the reaction an aldehyde + O2 + H2O = a carboxylate + H2O2 + H(+). In terms of biological role, catalyzes the oxidation of aldehydes to the corresponding carboxylate by coupling the reaction to the reduction of dioxygen to hydrogen peroxide. Substrates include glyoxal and other aldehydes. May be regulated by the transcription factor MYB80 during anther development and play a role in tapetum and pollen development. This chain is Aldehyde oxidase GLOX1, found in Arabidopsis thaliana (Mouse-ear cress).